The sequence spans 284 residues: Sulfotransferase 4A1 (284 aa).

3 positions are modified to phosphothreonine: threonine 8, threonine 11, and threonine 205.

This sequence belongs to the sulfotransferase 1 family. In terms of tissue distribution, expressed in brain, cerebellum and hypothalamus. Not detected in pancreas, liver, lung, intestine, kidney, uterus, adrenal gland, thymus, spleen, epididymis, testicle, and heart.

The protein localises to the cytoplasm. Atypical sulfotransferase family member with very low affinity for 3'-phospho-5'-adenylyl sulfate (PAPS) and very low catalytic activity towards L-triiodothyronine, thyroxine, estrone, p-nitrophenol, 2-naphthylamine, and 2-beta-naphthol. May have a role in the metabolism of drugs and neurotransmitters in the CNS. The polypeptide is Sulfotransferase 4A1 (Sult4a1) (Mus musculus (Mouse)).